Reading from the N-terminus, the 1169-residue chain is ATP-dependent helicase/deoxyribonuclease subunit B (1169 aa).

One can recognise a UvrD-like helicase ATP-binding domain in the interval 1 to 296 (MTLRIVSGRS…QHVEANFANM (296 aa)). Residue 8–15 (GRSGTGKS) participates in ATP binding. The UvrD-like helicase C-terminal domain maps to 276 to 582 (YYTQRFQSED…EFSRIPPTLD (307 aa)). Cys-804, Cys-1129, Cys-1132, and Cys-1138 together coordinate [4Fe-4S] cluster.

It belongs to the helicase family. AddB/RexB type 1 subfamily. As to quaternary structure, heterodimer of AddA and AddB. Mg(2+) serves as cofactor. It depends on [4Fe-4S] cluster as a cofactor.

The heterodimer acts as both an ATP-dependent DNA helicase and an ATP-dependent, dual-direction single-stranded exonuclease. Recognizes the chi site generating a DNA molecule suitable for the initiation of homologous recombination. The AddB subunit has 5' -&gt; 3' nuclease activity but not helicase activity. The protein is ATP-dependent helicase/deoxyribonuclease subunit B of Lysinibacillus sphaericus (strain C3-41).